The chain runs to 728 residues: 1,4-alpha-glucan branching enzyme GlgB (728 aa).

Catalysis depends on aspartate 405, which acts as the Nucleophile. Catalysis depends on glutamate 458, which acts as the Proton donor.

Belongs to the glycosyl hydrolase 13 family. GlgB subfamily. Monomer.

The enzyme catalyses Transfers a segment of a (1-&gt;4)-alpha-D-glucan chain to a primary hydroxy group in a similar glucan chain.. Its pathway is glycan biosynthesis; glycogen biosynthesis. Its function is as follows. Catalyzes the formation of the alpha-1,6-glucosidic linkages in glycogen by scission of a 1,4-alpha-linked oligosaccharide from growing alpha-1,4-glucan chains and the subsequent attachment of the oligosaccharide to the alpha-1,6 position. The chain is 1,4-alpha-glucan branching enzyme GlgB from Escherichia coli O139:H28 (strain E24377A / ETEC).